A 395-amino-acid polypeptide reads, in one-letter code: ATP phosphoribosyltransferase regulatory subunit (395 aa).

The protein belongs to the class-II aminoacyl-tRNA synthetase family. HisZ subfamily. As to quaternary structure, heteromultimer composed of HisG and HisZ subunits.

It is found in the cytoplasm. It participates in amino-acid biosynthesis; L-histidine biosynthesis; L-histidine from 5-phospho-alpha-D-ribose 1-diphosphate: step 1/9. Its function is as follows. Required for the first step of histidine biosynthesis. May allow the feedback regulation of ATP phosphoribosyltransferase activity by histidine. This is ATP phosphoribosyltransferase regulatory subunit from Ectopseudomonas mendocina (strain ymp) (Pseudomonas mendocina).